A 350-amino-acid polypeptide reads, in one-letter code: Protein pelota homolog (350 aa).

The protein belongs to the eukaryotic release factor 1 family. Pelota subfamily. As to quaternary structure, monomer. The cofactor is a divalent metal cation.

The protein resides in the cytoplasm. Its function is as follows. May function in recognizing stalled ribosomes, interact with stem-loop structures in stalled mRNA molecules, and effect endonucleolytic cleavage of the mRNA. May play a role in the release non-functional ribosomes and degradation of damaged mRNAs. Has endoribonuclease activity. This is Protein pelota homolog from Methanosarcina acetivorans (strain ATCC 35395 / DSM 2834 / JCM 12185 / C2A).